The sequence spans 86 residues: MATKKAGGSSRNGRDSAGRRLGVKQSDGQYVIPGNIIVRQRGTKIHPGRNVGLGKDHTIFALIEGRVEFVTKRNHKVVNVKEIASA.

The disordered stretch occupies residues Met-1 to Ser-26.

Belongs to the bacterial ribosomal protein bL27 family.

The chain is Large ribosomal subunit protein bL27 from Rickettsia canadensis (strain McKiel).